Reading from the N-terminus, the 607-residue chain is Chaperone protein DnaK (607 aa).

At Thr-174 the chain carries Phosphothreonine; by autocatalysis. The tract at residues Gly-577–Tyr-607 is disordered. The span at Pro-583–Gly-595 shows a compositional bias: gly residues.

This sequence belongs to the heat shock protein 70 family.

Functionally, acts as a chaperone. The chain is Chaperone protein DnaK from Caldicellulosiruptor bescii (strain ATCC BAA-1888 / DSM 6725 / KCTC 15123 / Z-1320) (Anaerocellum thermophilum).